The primary structure comprises 205 residues: Proteasome subunit beta type-3 (205 aa).

At serine 2 the chain carries N-acetylserine. The residue at position 77 (lysine 77) is an N6-acetyllysine.

It belongs to the peptidase T1B family. As to quaternary structure, the 26S proteasome consists of a 20S proteasome core and two 19S regulatory subunits. The 20S proteasome core is a barrel-shaped complex made of 28 subunits that are arranged in four stacked rings. The two outer rings are each formed by seven alpha subunits, and the two inner rings are formed by seven beta subunits. The proteolytic activity is exerted by three beta-subunits PSMB5, PSMB6 and PSMB7. (Microbial infection) Interacts with HIV-1 TAT protein.

The protein resides in the cytoplasm. It is found in the nucleus. Its function is as follows. Non-catalytic component of the 20S core proteasome complex involved in the proteolytic degradation of most intracellular proteins. This complex plays numerous essential roles within the cell by associating with different regulatory particles. Associated with two 19S regulatory particles, forms the 26S proteasome and thus participates in the ATP-dependent degradation of ubiquitinated proteins. The 26S proteasome plays a key role in the maintenance of protein homeostasis by removing misfolded or damaged proteins that could impair cellular functions, and by removing proteins whose functions are no longer required. Associated with the PA200 or PA28, the 20S proteasome mediates ubiquitin-independent protein degradation. This type of proteolysis is required in several pathways including spermatogenesis (20S-PA200 complex) or generation of a subset of MHC class I-presented antigenic peptides (20S-PA28 complex). This Homo sapiens (Human) protein is Proteasome subunit beta type-3.